The chain runs to 621 residues: Frizzled and smoothened-like protein H (621 aa).

The signal sequence occupies residues 1–21 (MNLKFYNLIFFISFLICCIHG). Residues 22–246 (QRYLPVEGGK…VWNQIFKIND (225 aa)) are Extracellular-facing. In terms of domain architecture, FZ spans 27-166 (VEGGKCEKYI…IEWVKYNLTI (140 aa)). Disulfide bonds link Cys-32–Cys-103 and Cys-46–Cys-96. N-linked (GlcNAc...) asparagine glycans are attached at residues Asn-60, Asn-107, Asn-163, Asn-176, and Asn-206. The chain crosses the membrane as a helical span at residues 247–267 (VLSSISLACTLILLFTFGILN). The Cytoplasmic portion of the chain corresponds to 268 to 277 (PKLNRFDKKN). A helical transmembrane segment spans residues 278-298 (LFFIAGVFGMSVSGVLIAANG). Residues 299-318 (SEKTVCPTPERYAVNTDRVC) are Extracellular-facing. A helical transmembrane segment spans residues 319–339 (VASGFLVHFSALFAILWWTIG). The Cytoplasmic segment spans residues 340–359 (LADVYYGIKFVGKKIKIKVR). The helical transmembrane segment at 360–380 (YYLLATLTISLAFTLVPLGTG) threads the bilayer. The Extracellular portion of the chain corresponds to 381–400 (QYQAGLSNVMCFLKDEIYQS). Residues 401–421 (MTFFVPLGICLTMGTILMILV) form a helical membrane-spanning segment. At 422 to 464 (MREIYVIVKSNSTSSSFSSSSSKSKSKSKSSDSISYLKLQVKP) the chain is on the cytoplasmic side. The chain crosses the membrane as a helical span at residues 465–485 (MLNIILFYFTFLYLFLFVRVI). Residues 486 to 520 (NSRYQEYEDSAIPYMLCLAKGGGDSCRLKGPSAGS) lie on the Extracellular side of the membrane. Residues 521–541 (LGYFAYCLRIYGIYLFIISFL) form a helical membrane-spanning segment. Residues 542–621 (SSRTIKIWKE…RNYNTDDDDL (80 aa)) are Cytoplasmic-facing. A compositionally biased stretch (low complexity) spans 575 to 594 (FSSSKNTSTTQNSTLNNTES). Residues 575–603 (FSSSKNTSTTQNSTLNNTESDTSKRGNSS) form a disordered region.

Belongs to the G-protein coupled receptor Fz/Smo family.

Its subcellular location is the membrane. This chain is Frizzled and smoothened-like protein H (fslH), found in Dictyostelium discoideum (Social amoeba).